Here is a 376-residue protein sequence, read N- to C-terminus: Actin-related protein T1 (376 aa).

The protein belongs to the actin family.

It localises to the cytoplasm. The protein resides in the cytoskeleton. Its subcellular location is the nucleus. It is found in the cytoplasmic vesicle. The protein localises to the secretory vesicle. It localises to the acrosome. Its function is as follows. Negatively regulates the Hedgehog (SHH) signaling. Binds to the promoter of the SHH signaling mediator, GLI1, and inhibits its expression. The polypeptide is Actin-related protein T1 (Actrt1) (Rattus norvegicus (Rat)).